Reading from the N-terminus, the 479-residue chain is B-cell CLL/lymphoma 6 member B protein (479 aa).

The region spanning 38–105 is the BTB domain; it reads TDVTLLVGGQ…MYTSRLRLSP (68 aa). 2 disordered regions span residues 143 to 190 and 210 to 259; these read RPLE…PDPK and GSLV…LSPT. Residues 147-160 are compositionally biased toward pro residues; the sequence is AEPPTPPTAPPPGS. The span at 162-172 shows a compositional bias: basic and acidic residues; sequence RRSEGHPDPPT. The span at 234 to 244 shows a compositional bias: low complexity; that stretch reads SSSSSSSSSSS. 5 consecutive C2H2-type zinc fingers follow at residues 328–350, 356–378, 384–406, 412–434, and 440–463; these read YKCQ…RTVH, YHCS…SRIH, YKCE…VLIH, YPCP…VRIH, and YHCD…RQKH.

Associates with BCL6 through the BTB domain. Ubiquitously expressed with higher expression found in heart and placenta.

The protein localises to the nucleus. Functionally, acts as a sequence-specific transcriptional repressor in association with BCL6. May function in a narrow stage or be related to some events in the early B-cell development. This chain is B-cell CLL/lymphoma 6 member B protein (BCL6B), found in Homo sapiens (Human).